Here is a 60-residue protein sequence, read N- to C-terminus: Large ribosomal subunit protein bL32 (60 aa).

The disordered stretch occupies residues 1 to 60; the sequence is MAVQQNKKSPSKRGMHRSHDFLVNPATAIEPNTGETHLRHHISPNGFYRGRKVLKTKADE. Over residues 49-60 the composition is skewed to basic residues; it reads RGRKVLKTKADE.

This sequence belongs to the bacterial ribosomal protein bL32 family.

The chain is Large ribosomal subunit protein bL32 from Bordetella bronchiseptica (strain ATCC BAA-588 / NCTC 13252 / RB50) (Alcaligenes bronchisepticus).